Consider the following 172-residue polypeptide: NADH dehydrogenase [ubiquinone] 1 alpha subcomplex subunit 8 (172 aa).

CHCH domains follow at residues 33–74 (GAQC…FRQI) and 75–118 (KRHC…MGWV). Short sequence motifs (cx9C motif) lie at residues 36–46 (CDKPNKEFMLC), 56–66 (CLEEGKLVNKC), 78–88 (CAEPFTEYWTC), and 100–110 (CRKQQAKFDEC). Cystine bridges form between Cys36–Cys66, Cys46–Cys56, Cys78–Cys110, and Cys88–Cys100. The segment at 133–159 (TDRPLPENPYHSRPRPDPSPEIEGDLK) is disordered. The span at 146–159 (PRPDPSPEIEGDLK) shows a compositional bias: basic and acidic residues.

The protein belongs to the complex I NDUFA8 subunit family. Complex I is composed of 45 different subunits.

The protein resides in the mitochondrion inner membrane. It is found in the mitochondrion intermembrane space. Its subcellular location is the mitochondrion. Its function is as follows. Accessory subunit of the mitochondrial membrane respiratory chain NADH dehydrogenase (Complex I), that is believed not to be involved in catalysis. Complex I functions in the transfer of electrons from NADH to the respiratory chain. The immediate electron acceptor for the enzyme is believed to be ubiquinone. This chain is NADH dehydrogenase [ubiquinone] 1 alpha subcomplex subunit 8 (NDUFA8), found in Pongo abelii (Sumatran orangutan).